Consider the following 420-residue polypeptide: UDP-N-acetylglucosamine 1-carboxyvinyltransferase (420 aa).

Phosphoenolpyruvate is bound at residue 22–23 (KN). Residue Arg-94 participates in UDP-N-acetyl-alpha-D-glucosamine binding. Catalysis depends on Cys-118, which acts as the Proton donor. A 2-(S-cysteinyl)pyruvic acid O-phosphothioketal modification is found at Cys-118. UDP-N-acetyl-alpha-D-glucosamine-binding residues include Asp-306 and Ile-328.

This sequence belongs to the EPSP synthase family. MurA subfamily.

The protein resides in the cytoplasm. The catalysed reaction is phosphoenolpyruvate + UDP-N-acetyl-alpha-D-glucosamine = UDP-N-acetyl-3-O-(1-carboxyvinyl)-alpha-D-glucosamine + phosphate. The protein operates within cell wall biogenesis; peptidoglycan biosynthesis. Functionally, cell wall formation. Adds enolpyruvyl to UDP-N-acetylglucosamine. In Jannaschia sp. (strain CCS1), this protein is UDP-N-acetylglucosamine 1-carboxyvinyltransferase.